The primary structure comprises 134 residues: Histone H2A (134 aa).

The span at 1–10 (MTGGKSGGKA) shows a compositional bias: gly residues. The disordered stretch occupies residues 1–26 (MTGGKSGGKASGSKSSAQSRSSKAGL). 2 positions are modified to N6-acetyllysine: lysine 5 and lysine 9. Low complexity predominate over residues 11 to 25 (SGSKSSAQSRSSKAG). Glutamine 107 is modified (N5-methylglutamine). Serine 131 carries the post-translational modification Phosphoserine. Positions 131–132 (SQ) match the [ST]-Q motif motif.

This sequence belongs to the histone H2A family. As to quaternary structure, the nucleosome is a histone octamer containing two molecules each of H2A, H2B, H3 and H4 assembled in one H3-H4 heterotetramer and two H2A-H2B heterodimers. The octamer wraps approximately 147 bp of DNA. Post-translationally, phosphorylated to form H2AS128ph (gamma-H2A) in response to DNA double-strand breaks (DSBs) generated by exogenous genotoxic agents and by stalled replication forks. Phosphorylation is dependent on the DNA damage checkpoint kinases MEC1/ATR and TEL1/ATM, spreads on either side of a detected DSB site and may mark the surrounding chromatin for recruitment of proteins required for DNA damage signaling and repair. Gamma-H2A is removed from the DNA prior to the strand invasion-primer extension step of the repair process and subsequently dephosphorylated. Dephosphorylation is necessary for efficient recovery from the DNA damage checkpoint. Acetylated by ESA1 to form H2AK4ac and H2AK7ac.

It is found in the nucleus. Its subcellular location is the chromosome. Its function is as follows. Core component of nucleosome which plays a central role in DNA double strand break (DSB) repair. Nucleosomes wrap and compact DNA into chromatin, limiting DNA accessibility to the cellular machineries which require DNA as a template. Histones thereby play a central role in transcription regulation, DNA repair, DNA replication and chromosomal stability. DNA accessibility is regulated via a complex set of post-translational modifications of histones, also called histone code, and nucleosome remodeling. The sequence is that of Histone H2A (HTA1) from Phaeosphaeria nodorum (strain SN15 / ATCC MYA-4574 / FGSC 10173) (Glume blotch fungus).